The chain runs to 273 residues: Glutamate 5-kinase (273 aa).

An ATP-binding site is contributed by K15. Residues S55, D142, and N158 each coordinate substrate. ATP-binding positions include 178–179 and 220–226; these read SD and TGGMLSK.

This sequence belongs to the glutamate 5-kinase family.

Its subcellular location is the cytoplasm. The catalysed reaction is L-glutamate + ATP = L-glutamyl 5-phosphate + ADP. The protein operates within amino-acid biosynthesis; L-proline biosynthesis; L-glutamate 5-semialdehyde from L-glutamate: step 1/2. Catalyzes the transfer of a phosphate group to glutamate to form L-glutamate 5-phosphate. This chain is Glutamate 5-kinase, found in Streptococcus pyogenes serotype M4 (strain MGAS10750).